We begin with the raw amino-acid sequence, 201 residues long: Large ribosomal subunit protein uL4 (201 aa).

The segment at 45 to 72 (AQKTRAEVTGSGKKPWRQKGTGRARAGS) is disordered.

This sequence belongs to the universal ribosomal protein uL4 family. Part of the 50S ribosomal subunit.

Its function is as follows. One of the primary rRNA binding proteins, this protein initially binds near the 5'-end of the 23S rRNA. It is important during the early stages of 50S assembly. It makes multiple contacts with different domains of the 23S rRNA in the assembled 50S subunit and ribosome. Forms part of the polypeptide exit tunnel. The chain is Large ribosomal subunit protein uL4 from Shewanella frigidimarina (strain NCIMB 400).